Consider the following 328-residue polypeptide: Flagellar motor switch protein FliM (328 aa).

An interaction with unphosphorylated CheY region spans residues methionine 1–serine 45.

This sequence belongs to the FliM family. As to quaternary structure, interacts (via N-terminus) with unphosphorylated CheY. Interacts (via central domain) with FliG (via central domain or via central domain and C-terminus).

It localises to the cell inner membrane. The protein resides in the bacterial flagellum basal body. In terms of biological role, fliM is one of three proteins (FliG, FliN, FliM) that forms the rotor-mounted switch complex (C ring), located at the base of the basal body. This complex interacts with the CheY and CheX chemotaxis proteins, in addition to contacting components of the motor that determine the direction of flagellar rotation. The polypeptide is Flagellar motor switch protein FliM (Thermotoga maritima (strain ATCC 43589 / DSM 3109 / JCM 10099 / NBRC 100826 / MSB8)).